The primary structure comprises 250 residues: 3-deoxy-manno-octulosonate cytidylyltransferase (250 aa).

Belongs to the KdsB family.

Its subcellular location is the cytoplasm. It carries out the reaction 3-deoxy-alpha-D-manno-oct-2-ulosonate + CTP = CMP-3-deoxy-beta-D-manno-octulosonate + diphosphate. It functions in the pathway nucleotide-sugar biosynthesis; CMP-3-deoxy-D-manno-octulosonate biosynthesis; CMP-3-deoxy-D-manno-octulosonate from 3-deoxy-D-manno-octulosonate and CTP: step 1/1. It participates in bacterial outer membrane biogenesis; lipopolysaccharide biosynthesis. In terms of biological role, activates KDO (a required 8-carbon sugar) for incorporation into bacterial lipopolysaccharide in Gram-negative bacteria. The polypeptide is 3-deoxy-manno-octulosonate cytidylyltransferase (Yersinia enterocolitica serotype O:8 / biotype 1B (strain NCTC 13174 / 8081)).